The primary structure comprises 327 residues: Delta(6)-protoilludene synthase HYPSUDRAFT_138665 (327 aa).

Mg(2+) contacts are provided by Asp79, Asn215, Ser219, and Glu223. The DDXXD motif signature appears at 79–83 (DEHTD). Residues Arg304 and Tyr305 each coordinate (2E,6E)-farnesyl diphosphate.

Belongs to the terpene synthase family. Requires Mg(2+) as cofactor.

The enzyme catalyses (2E,6E)-farnesyl diphosphate = Delta(6)-protoilludene + diphosphate. Functionally, terpene cyclase that catalyzes the cyclization of farnesyl diphosphate (FPP) to delta(6)-protoilludene. This Hypholoma sublateritium (strain FD-334 SS-4) protein is Delta(6)-protoilludene synthase HYPSUDRAFT_138665.